We begin with the raw amino-acid sequence, 1221 residues long: DNA topoisomerase 2 (1221 aa).

ATP is bound by residues Asn65, Asn94, 122 to 124 (SSN), 135 to 142 (GRHGYGAK), and 352 to 354 (QNK). Positions 432 to 546 (RTLIVTEGDS…SLLVRNPGFI (115 aa)) constitute a Toprim domain. Residues Glu438, Asp515, and Asp517 each contribute to the Mg(2+) site. The Topo IIA-type catalytic domain maps to 681–1097 (LAHSVDGLKP…TPVQLWLGEL (417 aa)). Residue Tyr771 is the O-(5'-phospho-DNA)-tyrosine intermediate of the active site. Residues 952-961 (GLTQRIHING) are interaction with DNA. The interval 1158 to 1198 (VPPPTKRGAGGRSDGDGGATAAGAAAAVGGRGEKKGPGRAG) is disordered. Residues 1165–1177 (GAGGRSDGDGGAT) are compositionally biased toward gly residues.

Belongs to the type II topoisomerase family. In terms of assembly, homodimer. It depends on Mg(2+) as a cofactor. Mn(2+) is required as a cofactor. The cofactor is Ca(2+).

Its subcellular location is the nucleus. It catalyses the reaction ATP-dependent breakage, passage and rejoining of double-stranded DNA.. Control of topological states of DNA by transient breakage and subsequent rejoining of DNA strands. Topoisomerase II makes double-strand breaks. The polypeptide is DNA topoisomerase 2 (TOP2) (Trypanosoma brucei brucei).